Reading from the N-terminus, the 304-residue chain is D-alanine--D-alanine ligase (304 aa).

The 197-residue stretch at 103-299 (KLIWQALGLP…FADLCIEILK (197 aa)) folds into the ATP-grasp domain. 129 to 184 (EEKLGLPMFVKPAAEGSSVGVVKVKGKGRLKSVYEELKHLQGEIIAERFIGGGEYS) serves as a coordination point for ATP. Residues Asp-253, Glu-266, and Asn-268 each coordinate Mg(2+).

It belongs to the D-alanine--D-alanine ligase family. Mg(2+) is required as a cofactor. Requires Mn(2+) as cofactor.

It is found in the cytoplasm. The catalysed reaction is 2 D-alanine + ATP = D-alanyl-D-alanine + ADP + phosphate + H(+). It functions in the pathway cell wall biogenesis; peptidoglycan biosynthesis. In terms of biological role, cell wall formation. This chain is D-alanine--D-alanine ligase, found in Neisseria meningitidis serogroup B (strain ATCC BAA-335 / MC58).